The primary structure comprises 73 residues: Defensin-like protein 10 (73 aa).

Residues 1–28 (MKLSLRLISALLMSVMLLFATGMGPVEA) form the signal peptide. 4 disulfide bridges follow: Cys31/Cys73, Cys42/Cys62, Cys48/Cys67, and Cys52/Cys69.

The protein belongs to the DEFL family.

It is found in the secreted. Its function is as follows. Confers broad-spectrum resistance to pathogens. This Arabidopsis thaliana (Mouse-ear cress) protein is Defensin-like protein 10 (PDF2.6).